The primary structure comprises 150 residues: Large-conductance mechanosensitive channel (150 aa).

Helical transmembrane passes span 14 to 34 and 81 to 101; these read VIDL…VTSL and GLFI…FIVI.

It belongs to the MscL family. As to quaternary structure, homopentamer.

The protein localises to the cell membrane. Channel that opens in response to stretch forces in the membrane lipid bilayer. May participate in the regulation of osmotic pressure changes within the cell. The protein is Large-conductance mechanosensitive channel of Desulfitobacterium hafniense (strain DSM 10664 / DCB-2).